A 149-amino-acid polypeptide reads, in one-letter code: Nucleoside diphosphate kinase (149 aa).

ATP is bound by residues Lys-9, Phe-57, Arg-85, Thr-91, Arg-102, and Asn-112. His-115 functions as the Pros-phosphohistidine intermediate in the catalytic mechanism.

This sequence belongs to the NDK family. As to quaternary structure, homotetramer. The cofactor is Mg(2+).

Its subcellular location is the cytoplasm. The enzyme catalyses a 2'-deoxyribonucleoside 5'-diphosphate + ATP = a 2'-deoxyribonucleoside 5'-triphosphate + ADP. The catalysed reaction is a ribonucleoside 5'-diphosphate + ATP = a ribonucleoside 5'-triphosphate + ADP. Major role in the synthesis of nucleoside triphosphates other than ATP. The ATP gamma phosphate is transferred to the NDP beta phosphate via a ping-pong mechanism, using a phosphorylated active-site intermediate. This Gloeobacter violaceus (strain ATCC 29082 / PCC 7421) protein is Nucleoside diphosphate kinase.